Here is a 187-residue protein sequence, read N- to C-terminus: Elongation factor P (187 aa).

Belongs to the elongation factor P family.

The protein resides in the cytoplasm. Its pathway is protein biosynthesis; polypeptide chain elongation. Its function is as follows. Involved in peptide bond synthesis. Stimulates efficient translation and peptide-bond synthesis on native or reconstituted 70S ribosomes in vitro. Probably functions indirectly by altering the affinity of the ribosome for aminoacyl-tRNA, thus increasing their reactivity as acceptors for peptidyl transferase. This Magnetococcus marinus (strain ATCC BAA-1437 / JCM 17883 / MC-1) protein is Elongation factor P.